A 108-amino-acid chain; its full sequence is Replication restart protein PriB (108 aa).

The SSB domain maps to 8 to 108; that stretch reads IDNRFSVMGV…LHAEQIEFID (101 aa).

The protein belongs to the PriB family. In terms of assembly, homodimer. Interacts with PriA and DnaT. Component of the replication restart primosome. Primosome assembly occurs via a 'hand-off' mechanism. PriA binds to replication forks, subsequently PriB then DnaT bind; DnaT then displaces ssDNA to generate the helicase loading substrate.

Its function is as follows. Involved in the restart of stalled replication forks, which reloads the replicative helicase on sites other than the origin of replication; the PriA-PriB pathway is the major replication restart pathway. During primosome assembly it facilitates complex formation between PriA and DnaT on DNA; stabilizes PriA on DNA. Stimulates the DNA unwinding activity of PriA helicase. The chain is Replication restart protein PriB from Haemophilus influenzae (strain 86-028NP).